The chain runs to 187 residues: Protein SCM4 (187 aa).

A run of 3 helical transmembrane segments spans residues 11 to 31 (IAVS…VISI), 45 to 65 (VLCT…GAFG), and 80 to 100 (LLCG…VSLF). Over residues 114–134 (DLEKQKDEKLPQHHPEVKDGE) the composition is skewed to basic and acidic residues. Residues 114 to 135 (DLEKQKDEKLPQHHPEVKDGEA) form a disordered region. Residues 162 to 182 (MSLHMSIVTGITIFTFGKCIL) form a helical membrane-spanning segment.

Belongs to the ATG33 family.

The protein resides in the membrane. This Saccharomyces cerevisiae (strain ATCC 204508 / S288c) (Baker's yeast) protein is Protein SCM4 (SCM4).